The chain runs to 211 residues: External core antigen (211 aa).

The signal sequence occupies residues M1–A19. The HBEAG stretch occupies residues G25–L27. The segment at N165–C211 is disordered. Over residues V178–S204 the composition is skewed to basic residues. A 1; half-length repeat occupies P183–P189. The 3 X 8 AA repeats of S-P-R-R-R-R-S-Q stretch occupies residues P183 to Q205. The propeptide occupies P183 to C211. 2 tandem repeats follow at residues S190–Q197 and S198–Q205.

It belongs to the orthohepadnavirus precore antigen family. Homodimerizes. Post-translationally, phosphorylated. Cleaved by host furin.

It localises to the secreted. The protein resides in the host nucleus. Its function is as follows. May regulate immune response to the intracellular capsid in acting as a T-cell tolerogen, by having an immunoregulatory effect which prevents destruction of infected cells by cytotoxic T-cells. This immune regulation may predispose to chronicity during perinatal infections and prevent severe liver injury during adult infections. This chain is External core antigen, found in Woolly monkey hepatitis B virus (isolate Louisville) (WMHBV).